The following is a 431-amino-acid chain: Enolase (431 aa).

(2R)-2-phosphoglycerate is bound at residue Gln168. Glu210 acts as the Proton donor in catalysis. Residues Asp247, Glu291, and Asp318 each contribute to the Mg(2+) site. Positions 343, 372, 373, and 394 each coordinate (2R)-2-phosphoglycerate. Lys343 serves as the catalytic Proton acceptor.

Belongs to the enolase family. As to quaternary structure, component of the RNA degradosome, a multiprotein complex involved in RNA processing and mRNA degradation. It depends on Mg(2+) as a cofactor.

The protein resides in the cytoplasm. It is found in the secreted. It localises to the cell surface. It catalyses the reaction (2R)-2-phosphoglycerate = phosphoenolpyruvate + H2O. Its pathway is carbohydrate degradation; glycolysis; pyruvate from D-glyceraldehyde 3-phosphate: step 4/5. Its function is as follows. Catalyzes the reversible conversion of 2-phosphoglycerate (2-PG) into phosphoenolpyruvate (PEP). It is essential for the degradation of carbohydrates via glycolysis. The polypeptide is Enolase (Acinetobacter baumannii (strain SDF)).